A 308-amino-acid polypeptide reads, in one-letter code: Glutaminase 2 (308 aa).

The substrate site is built by serine 66, asparagine 117, glutamate 161, asparagine 168, tyrosine 192, tyrosine 244, and valine 262.

Belongs to the glutaminase family. As to quaternary structure, homotetramer.

The catalysed reaction is L-glutamine + H2O = L-glutamate + NH4(+). This is Glutaminase 2 from Shigella flexneri.